Reading from the N-terminus, the 308-residue chain is tRNA dimethylallyltransferase (308 aa).

Residue 14 to 21 (GPTASGKT) participates in ATP binding. A substrate-binding site is contributed by 16–21 (TASGKT). Interaction with substrate tRNA regions lie at residues 39–42 (DSAL), 163–167 (QRLAR), and 244–249 (RCVGYR).

The protein belongs to the IPP transferase family. As to quaternary structure, monomer. Mg(2+) is required as a cofactor.

It carries out the reaction adenosine(37) in tRNA + dimethylallyl diphosphate = N(6)-dimethylallyladenosine(37) in tRNA + diphosphate. Functionally, catalyzes the transfer of a dimethylallyl group onto the adenine at position 37 in tRNAs that read codons beginning with uridine, leading to the formation of N6-(dimethylallyl)adenosine (i(6)A). In Shewanella halifaxensis (strain HAW-EB4), this protein is tRNA dimethylallyltransferase.